A 390-amino-acid polypeptide reads, in one-letter code: Neuromedin-B receptor (390 aa).

Topologically, residues 1–41 (MPPRSLSNLSFPTEANESELVPEVWEKDFLPDSDGTTAELV) are extracellular. Residues Asn-8 and Asn-16 are each glycosylated (N-linked (GlcNAc...) asparagine). The helical transmembrane segment at 42–65 (IRCVIPSLYLIIISVGLLGNIMLV) threads the bilayer. The Cytoplasmic segment spans residues 66–79 (KIFLTNSAMRNVPN). A helical membrane pass occupies residues 80–99 (IFISNLAAGDLLLLLTCVPV). At 100-117 (DASRYFFDEWVFGKLGCK) the chain is on the extracellular side. Cys-116 and Cys-198 are disulfide-bonded. A helical transmembrane segment spans residues 118-139 (LIPAIQLTSVGVSVFTLTALSA). The Cytoplasmic portion of the chain corresponds to 140 to 156 (DRYRAIVNPMDMQTSGV). A helical transmembrane segment spans residues 157–177 (LLWTSLKAVGIWVVSVLLAVP). At 178–211 (EAVFSEVARIGSLDNSSFTACIPYPQTDELHPKI) the chain is on the extracellular side. Asn-192 carries N-linked (GlcNAc...) asparagine glycosylation. Residues 212-235 (HSVLIFLVYFLIPLVIISIYYYHI) traverse the membrane as a helical segment. Residues 236–266 (AKTLIKSAHNLPGEYNEHTKKQMETRKRLAK) are Cytoplasmic-facing. Residues 267 to 287 (IVLVFVGCFVFCWFPNHVLYL) traverse the membrane as a helical segment. Over 288-299 (YRSFNYKEIDPS) the chain is Extracellular. A helical transmembrane segment spans residues 300 to 327 (LGHMIVTLVARVLSFSNSCVNPFALYLL). At 328 to 390 (SESFRKHFNS…GHSTKQEIAL (63 aa)) the chain is on the cytoplasmic side. The S-palmitoyl cysteine moiety is linked to residue Cys-341. The residue at position 352 (Ser-352) is a Phosphoserine.

The protein belongs to the G-protein coupled receptor 1 family. Expressed in a subset of neurons of the pre-Botzinger complex. Within the pre-Botzinger complex, there is some overlap with neurons expressing Grpr with some cells expressing only Grpr or Nmbr while some cells express both. Expressed in dorsal root ganglion neurons and mast cells. Expressed in lung.

The protein resides in the cell membrane. In terms of biological role, receptor for neuromedin-B. Contributes to the maintenance of basal sigh rate through signaling in the pre-Botzinger complex, a cluster of several thousand neurons in the ventrolateral medulla responsible for inspiration during respiratory activity. Contributes to the induction of sneezing following exposure to chemical irritants or allergens which causes release of NMB by nasal sensory neurons and activation of NMBR-expressing neurons in the sneeze-evoking region of the brainstem. These in turn activate neurons of the caudal ventral respiratory group, giving rise to the sneezing response. Contributes to induction of acute itch, possibly through its activation on dorsal root ganglion neurons by the NMB peptide. Plays a role in the innate immune response to influenza A virus infection by enhancing interferon alpha expression and reducing expression of IL6. Plays a role in CSF1-induced proliferation of osteoclast precursors by contributing to the positive regulation of the expression of the CSF1 receptor CSF1R. This is Neuromedin-B receptor (Nmbr) from Mus musculus (Mouse).